Reading from the N-terminus, the 163-residue chain is NADH-quinone oxidoreductase subunit J (163 aa).

Helical transmembrane passes span M1 to I21, L30 to F50, L54 to L74, I94 to V114, and L138 to I158.

The protein belongs to the complex I subunit 6 family. Composed of 13 different subunits. Subunits NuoA, H, J, K, L, M, N constitute the membrane sector of the complex.

The protein localises to the cell membrane. The catalysed reaction is a quinone + NADH + 5 H(+)(in) = a quinol + NAD(+) + 4 H(+)(out). Functionally, NDH-1 shuttles electrons from NADH, via FMN and iron-sulfur (Fe-S) centers, to quinones in the respiratory chain. Couples the redox reaction to proton translocation (for every two electrons transferred, four hydrogen ions are translocated across the cytoplasmic membrane), and thus conserves the redox energy in a proton gradient. The protein is NADH-quinone oxidoreductase subunit J (nuoJ) of Buchnera aphidicola subsp. Schizaphis graminum (strain Sg).